The following is a 664-amino-acid chain: Kinesin-like protein KIF2B (664 aa).

At T125 the chain carries Phosphothreonine; by PLK1. A coiled-coil region spans residues 149–177 (CLREIEKLQKQREKRRRLQLEIRARRALD). S204 carries the post-translational modification Phosphoserine; by PLK1. The Kinesin motor domain maps to 213-543 (RICVCVRKRP…LRYANRVKEL (331 aa)). Residue 303–310 (GQTGSGKT) participates in ATP binding. The tract at residues 583-607 (VQKEEEKESDELTSTKEPAASWSRS) is disordered. Positions 642–663 (VLTEIQKKLQLLRDDLQKKSQA) form a coiled coil.

The protein belongs to the TRAFAC class myosin-kinesin ATPase superfamily. Kinesin family. MCAK/KIF2 subfamily. Phosphorylation at Thr-125 by PLK1 is required for activity in the correction of kinetochore-microtubules attachment errors, while phosphorylation at Ser-204 also by PLK1 is required for the kinetochore localization and activity in prometaphase.

The protein resides in the cytoplasm. It localises to the cytoskeleton. Its subcellular location is the microtubule organizing center. The protein localises to the centrosome. It is found in the spindle. The protein resides in the chromosome. It localises to the centromere. Its subcellular location is the kinetochore. In terms of biological role, plus end-directed microtubule-dependent motor required for spindle assembly and chromosome movement. Has microtubule depolymerization activity. Plays a role in chromosome congression. In Rattus norvegicus (Rat), this protein is Kinesin-like protein KIF2B.